A 285-amino-acid chain; its full sequence is Acetyl-coenzyme A carboxylase carboxyl transferase subunit beta (285 aa).

One can recognise a CoA carboxyltransferase N-terminal domain in the interval 33–285 (MWIKCSKCGK…TLGNILRMHS (253 aa)). The Zn(2+) site is built by C37, C40, C56, and C59. The segment at 37–59 (CSKCGKILYKSDVDDNFKVCPKC) adopts a C4-type zinc-finger fold.

This sequence belongs to the AccD/PCCB family. Acetyl-CoA carboxylase is a heterohexamer composed of biotin carboxyl carrier protein (AccB), biotin carboxylase (AccC) and two subunits each of ACCase subunit alpha (AccA) and ACCase subunit beta (AccD). Zn(2+) serves as cofactor.

Its subcellular location is the cytoplasm. It catalyses the reaction N(6)-carboxybiotinyl-L-lysyl-[protein] + acetyl-CoA = N(6)-biotinyl-L-lysyl-[protein] + malonyl-CoA. The protein operates within lipid metabolism; malonyl-CoA biosynthesis; malonyl-CoA from acetyl-CoA: step 1/1. Functionally, component of the acetyl coenzyme A carboxylase (ACC) complex. Biotin carboxylase (BC) catalyzes the carboxylation of biotin on its carrier protein (BCCP) and then the CO(2) group is transferred by the transcarboxylase to acetyl-CoA to form malonyl-CoA. This is Acetyl-coenzyme A carboxylase carboxyl transferase subunit beta from Clostridium acetobutylicum (strain ATCC 824 / DSM 792 / JCM 1419 / IAM 19013 / LMG 5710 / NBRC 13948 / NRRL B-527 / VKM B-1787 / 2291 / W).